A 308-amino-acid chain; its full sequence is B3 domain-containing protein REM23 (308 aa).

Residues 19–114 (FFKVLKRSDM…SFTVKIFNKD (96 aa)) constitute a DNA-binding region (TF-B3 1). The tract at residues 117–198 (EMMQPPQSRA…TERTQNSKRT (82 aa)) is disordered. The span at 121-133 (PPQSRASFASSSR) shows a compositional bias: polar residues. Basic and acidic residues predominate over residues 134–145 (VKTEQDVKREEE). The span at 149–166 (SSDSRSRGPTTAAETNRG) shows a compositional bias: polar residues. A compositionally biased stretch (basic residues) spans 168-177 (SYKRKLNFGK). The segment covering 178-198 (KKAEETQTYKRTERTQNSKRT) has biased composition (basic and acidic residues). The TF-B3 2 DNA-binding region spans 216-308 (VAGFKIFISK…LELLLVVSKP (93 aa)).

Its subcellular location is the nucleus. The sequence is that of B3 domain-containing protein REM23 (REM23) from Arabidopsis thaliana (Mouse-ear cress).